The sequence spans 2561 residues: Squalestatin hexaketide synthase (2561 aa).

The interval 1-77 is disordered; the sequence is MDVSKEEGQR…NGTTNITPEF (77 aa). Residues 20 to 74 are compositionally biased toward low complexity; sequence NETTNGHTNGYTNGHTNGHTNGTTNATTNGTTNGTMNGTTNGTTNRTTNGTTNIT. In terms of domain architecture, Ketosynthase family 3 (KS3) spans 83 to 503; it reads QVPVAICGIG…GSNTHIIIDS (421 aa). Active-site for beta-ketoacyl synthase activity residues include Cys-253, His-390, and His-427. A malonyl-CoA:ACP transacylase (MAT) domain region spans residues 603–925; that stretch reads FIFTGQGAQW…LEAIGKLFCF (323 aa). An N-terminal hotdog fold region spans residues 972-1101; it reads HELLGERSLE…GLVTASVVIS (130 aa). The dehydratase (DH) domain stretch occupies residues 972-1253; the sequence is HELLGERSLE…RGFKCKRTDE (282 aa). Positions 972-1257 constitute a PKS/mFAS DH domain; the sequence is HELLGERSLE…CKRTDESFIQ (286 aa). His-1004 (proton acceptor; for dehydratase activity) is an active-site residue. The tract at residues 1112-1257 is C-terminal hotdog fold; that stretch reads TFPRKVDTSR…CKRTDESFIQ (146 aa). Asp-1174 acts as the Proton donor; for dehydratase activity in catalysis. Positions 1421 to 1599 are methyltransferase (CMet) domain; it reads SFFQAAGLNK…GFEGAGTVVL (179 aa). Residues 1826–2146 form an enoyl reductase (ER) (ER) domain region; sequence GMLNTLHWVG…RGVHMGRIVV (321 aa). Positions 2170 to 2343 are ketoreductase (KR) domain; it reads STYLLTGGMG…PASVIDIAAI (174 aa). One can recognise a Carrier domain in the interval 2472 to 2550; the sequence is VLFAQEIAKR…SLGRLATKRL (79 aa). Position 2509 is an O-(pantetheine 4'-phosphoryl)serine (Ser-2509).

It participates in secondary metabolite biosynthesis. In terms of biological role, highly reducing polyketide synthase (HR-PKS); part of the gene cluster that mediates the biosynthesis of squalestatin S1 (SQS1, also known as zaragozic acid A), a heavily oxidized fungal polyketide that offers potent cholesterol lowering activity by targeting squalene synthase (SS). SQS1 is composed of a 2,8-dioxobicyclic[3.2.1]octane-3,4,5-tricarboxyclic acid core that is connected to two lipophilic polyketide arms. These initial steps feature the priming of an unusual benzoic acid starter unit onto the highly reducing polyketide synthase pks2, followed by oxaloacetate extension and product release to generate a tricarboxylic acid containing product. The phenylalanine ammonia lyase (PAL) M7 and the acyl-CoA ligase M9 are involved in transforming phenylalanine into benzoyl-CoA. The citrate synthase-like protein R3 is involved in connecting the C-alpha-carbons of the hexaketide chain and oxaloacetate to afford the tricarboxylic acid unit. The potential hydrolytic enzymes, M8 and M10, are in close proximity to pks2 and may participate in product release. On the other side, the tetraketide arm is synthesized by a the squalestatin tetraketide synthase pks1 and enzymatically esterified to the core in the last biosynthetic step, by the acetyltransferase M4. The biosynthesis of the tetraketide must involve 3 rounds of chain extension. After the first and second rounds methyl-transfer occurs, and in all rounds of extension the ketoreductase and dehydratase are active. The enoyl reductase and C-MeT of pks1 are not active in the final round of extension. The acetyltransferase M4 appears to have a broad substrate selectivity for its acyl CoA substrate, allowing the in vitro synthesis of novel squalestatins. The biosynthesis of SQS1 requires several oxidative steps likely performed by oxidoreductases M1, R1 and R2. Finally, in support of the identification of the cluster as being responsible for SQS1 production, the cluster contains a gene encoding a putative squalene synthase (SS) R6, suggesting a likely mechanism for self-resistance. This chain is Squalestatin hexaketide synthase, found in Phoma sp. (strain ATCC 20986 / MF5453).